A 228-amino-acid chain; its full sequence is Probable GTP-binding protein EngB (228 aa).

Residues 48–222 (YGLEVAFVGY…QFVLNNWFSS (175 aa)) enclose the EngB-type G domain. Residues 56 to 63 (GYSNSGKS), 83 to 87 (GRTRL), 101 to 104 (DFPG), 168 to 171 (NKMD), and 201 to 203 (FSS) contribute to the GTP site. Residues serine 63 and threonine 85 each coordinate Mg(2+).

It belongs to the TRAFAC class TrmE-Era-EngA-EngB-Septin-like GTPase superfamily. EngB GTPase family. The cofactor is Mg(2+).

In terms of biological role, necessary for normal cell division and for the maintenance of normal septation. The protein is Probable GTP-binding protein EngB of Buchnera aphidicola subsp. Baizongia pistaciae (strain Bp).